The following is a 391-amino-acid chain: Phosphoglycerate kinase (391 aa).

Substrate contacts are provided by residues 21–23 (DLN), R36, 59–62 (HRGR), R113, and R146. Residues K197, E314, and 340 to 343 (GGDT) contribute to the ATP site.

Belongs to the phosphoglycerate kinase family. As to quaternary structure, monomer.

It localises to the cytoplasm. The catalysed reaction is (2R)-3-phosphoglycerate + ATP = (2R)-3-phospho-glyceroyl phosphate + ADP. The protein operates within carbohydrate degradation; glycolysis; pyruvate from D-glyceraldehyde 3-phosphate: step 2/5. This chain is Phosphoglycerate kinase, found in Ruthia magnifica subsp. Calyptogena magnifica.